The sequence spans 406 residues: Tyrosine--tRNA ligase (406 aa).

Tyr-35 contacts L-tyrosine. The short motif at 40-49 (PTADSLHVGH) is the 'HIGH' region element. Residues Tyr-168 and Gln-172 each contribute to the L-tyrosine site. Residues 228–232 (KMGKT) carry the 'KMSKS' region motif. Lys-231 serves as a coordination point for ATP. Positions 340-405 (STVLDVIAKV…GKKNYNKIEI (66 aa)) constitute an S4 RNA-binding domain.

This sequence belongs to the class-I aminoacyl-tRNA synthetase family. TyrS type 1 subfamily. Homodimer.

Its subcellular location is the cytoplasm. The enzyme catalyses tRNA(Tyr) + L-tyrosine + ATP = L-tyrosyl-tRNA(Tyr) + AMP + diphosphate + H(+). Catalyzes the attachment of tyrosine to tRNA(Tyr) in a two-step reaction: tyrosine is first activated by ATP to form Tyr-AMP and then transferred to the acceptor end of tRNA(Tyr). The sequence is that of Tyrosine--tRNA ligase from Clostridium botulinum (strain Eklund 17B / Type B).